A 25-amino-acid chain; its full sequence is Antithrombin-III (25 aa).

This sequence belongs to the serpin family. Forms protease inhibiting heterodimer with TMPRSS7. Post-translationally, phosphorylated by FAM20C in the extracellular medium. In terms of tissue distribution, plasma.

It localises to the secreted. Its subcellular location is the extracellular space. In terms of biological role, most important serine protease inhibitor in plasma that regulates the blood coagulation cascade. AT-III inhibits thrombin, matriptase-3/TMPRSS7, as well as factors IXa, Xa and XIa. Its inhibitory activity is greatly enhanced in the presence of heparin. In Mesocricetus auratus (Golden hamster), this protein is Antithrombin-III (SERPINC1).